Reading from the N-terminus, the 234-residue chain is MMNELFGEFLGTLILILLGNGVVAGVVLPKTKSNSSGWIVITMGWGIAVAVAVFVSGKLSPAYLNPAVTIGVALKGGLPWASVLPYILAQFAGAMLGQILVWLQFKPHYEAEENAGNILATFSTGPAIKDTVSNLISEILGTFVLVLTIFALGLYDFQAGIGTFAVGTLIVGIGLSLGGTTGYALNPARDLGPRIMHSILPIPNKGDGDWSYAWIPVVGPVIGAALAVLVFSLF.

6 consecutive transmembrane segments (helical) span residues phenylalanine 9 to proline 29, glycine 37 to glycine 57, proline 61 to alanine 81, valine 83 to leucine 103, leucine 135 to tyrosine 155, and alanine 159 to glycine 179. The short motif at asparagine 65–alanine 67 is the NPA 1 element. The NPA 2 signature appears at asparagine 186–alanine 188. A helical transmembrane segment spans residues tryptophan 214–phenylalanine 234.

Belongs to the MIP/aquaporin (TC 1.A.8) family.

It is found in the cell membrane. The enzyme catalyses glycerol(in) = glycerol(out). Functionally, mediates glycerol diffusion across the cytoplasmic membrane via a pore-type mechanism. The sequence is that of Glycerol uptake facilitator protein (glpF) from Streptococcus pneumoniae serotype 4 (strain ATCC BAA-334 / TIGR4).